We begin with the raw amino-acid sequence, 381 residues long: DNA replication and repair protein RecF (381 aa).

30-37 (GENAQGKT) serves as a coordination point for ATP.

It belongs to the RecF family.

Its subcellular location is the cytoplasm. Functionally, the RecF protein is involved in DNA metabolism; it is required for DNA replication and normal SOS inducibility. RecF binds preferentially to single-stranded, linear DNA. It also seems to bind ATP. The chain is DNA replication and repair protein RecF from Lactobacillus delbrueckii subsp. bulgaricus (strain ATCC BAA-365 / Lb-18).